Here is a 271-residue protein sequence, read N- to C-terminus: Formamidopyrimidine-DNA glycosylase (271 aa).

Pro2 serves as the catalytic Schiff-base intermediate with DNA. Glu3 serves as the catalytic Proton donor. The active-site Proton donor; for beta-elimination activity is Lys57. Positions 90, 109, and 151 each coordinate DNA. An FPG-type zinc finger spans residues His236 to Pro270. Residue Arg260 is the Proton donor; for delta-elimination activity of the active site.

This sequence belongs to the FPG family. Monomer. Zn(2+) is required as a cofactor.

It carries out the reaction Hydrolysis of DNA containing ring-opened 7-methylguanine residues, releasing 2,6-diamino-4-hydroxy-5-(N-methyl)formamidopyrimidine.. The enzyme catalyses 2'-deoxyribonucleotide-(2'-deoxyribose 5'-phosphate)-2'-deoxyribonucleotide-DNA = a 3'-end 2'-deoxyribonucleotide-(2,3-dehydro-2,3-deoxyribose 5'-phosphate)-DNA + a 5'-end 5'-phospho-2'-deoxyribonucleoside-DNA + H(+). Functionally, involved in base excision repair of DNA damaged by oxidation or by mutagenic agents. Acts as a DNA glycosylase that recognizes and removes damaged bases. Has a preference for oxidized purines, such as 7,8-dihydro-8-oxoguanine (8-oxoG). Has AP (apurinic/apyrimidinic) lyase activity and introduces nicks in the DNA strand. Cleaves the DNA backbone by beta-delta elimination to generate a single-strand break at the site of the removed base with both 3'- and 5'-phosphates. In Shewanella loihica (strain ATCC BAA-1088 / PV-4), this protein is Formamidopyrimidine-DNA glycosylase.